A 277-amino-acid polypeptide reads, in one-letter code: Glucose-6-phosphatase catalytic subunit 1 (277 aa).

Arginine 4 serves as a coordination point for substrate. The next 2 helical transmembrane spans lie at 39-59 (GHAM…LSIA) and 67-87 (LLYR…ELVV). Histidine 40 (proton donor) is an active-site residue. Residue arginine 91 coordinates substrate. The active-site Nucleophile is the histidine 97. A run of 3 helical transmembrane segments spans residues 131 to 151 (FLIT…LKAL), 215 to 235 (IGCI…TFSP), and 250 to 270 (AVAL…IYPV). A Prevents secretion from ER motif is present at residues 274-277 (GKNL).

The protein belongs to the glucose-6-phosphatase family.

The protein localises to the endoplasmic reticulum membrane. It catalyses the reaction D-glucose 6-phosphate + H2O = D-glucose + phosphate. It participates in carbohydrate biosynthesis; gluconeogenesis. Functionally, hydrolyzes glucose-6-phosphate to glucose in the endoplasmic reticulum. Forms with the glucose-6-phosphate transporter (SLC37A4/G6PT) the complex responsible for glucose production in the terminal step of glycogenolysis and gluconeogenesis. Hence, it is the key enzyme in homeostatic regulation of blood glucose levels. The protein is Glucose-6-phosphatase catalytic subunit 1 (g6pc1) of Haplochromis xenognathus (Lake Victoria cichlid).